The chain runs to 58 residues: Conotoxin Ar5.4 (58 aa).

Positions 1-20 (RIQSDLIRAALEDADMKNEK) are excised as a propeptide.

This sequence belongs to the conotoxin T superfamily. Contains 2 disulfide bonds that can be either 'C1-C3, C2-C4' or 'C1-C4, C2-C3', since these disulfide connectivities have been observed for conotoxins with cysteine framework V (for examples, see AC P0DQQ7 and AC P81755). In terms of tissue distribution, expressed by the venom duct.

The protein resides in the secreted. The protein is Conotoxin Ar5.4 of Conus arenatus (Sand-dusted cone).